We begin with the raw amino-acid sequence, 300 residues long: uncharacterized protein (300 aa).

This sequence belongs to the chlamydial CPn_0593/CT_474/TC_0759 family.

This is an uncharacterized protein from Chlamydia muridarum (strain MoPn / Nigg).